The primary structure comprises 396 residues: MAKAKFERTKPHVNVGTIGHVDHGKTTLTAALTKIGAERFGGEFKAYDAIDAAPEEKARGITISTAHVEYESPSRHYAHVDCPGHADYVKNMITGAAQMDGAILVCSAADGPMPQTREHILLSRQVGVPHIVVFLNKADMVDDAELLELVEMEVRELLSKYDFPGDDTPIIHGSARLALDGDQSEIGVPAILKLVDALDTFIPEPTRDVDRPFLMPVEDVFSISGRGTVVTGRIERGIIKVGDEIEIVGIRATQKTTVTGVEMFRKLLDQGQAGDNAGLLLRGTKRDDVERGQVLCKPGSIKPHTEFEAEVYVLSKDEGGRHTPFFKGYRPQLYFRTTDITGAIDLPEGVEMVMPGDNVKMTVTLINPVAMDEGLRFAIREGGRTVGAGVVSKIIK.

In terms of domain architecture, tr-type G spans 10-206 (KPHVNVGTIG…ALDTFIPEPT (197 aa)). The interval 19–26 (GHVDHGKT) is G1. 19–26 (GHVDHGKT) contacts GTP. T26 contacts Mg(2+). The tract at residues 60–64 (GITIS) is G2. The segment at 81-84 (DCPG) is G3. Residues 81–85 (DCPGH) and 136–139 (NKAD) each bind GTP. The tract at residues 136–139 (NKAD) is G4. The tract at residues 174 to 176 (SAR) is G5.

The protein belongs to the TRAFAC class translation factor GTPase superfamily. Classic translation factor GTPase family. EF-Tu/EF-1A subfamily. Monomer.

It is found in the cytoplasm. It catalyses the reaction GTP + H2O = GDP + phosphate + H(+). Functionally, GTP hydrolase that promotes the GTP-dependent binding of aminoacyl-tRNA to the A-site of ribosomes during protein biosynthesis. The protein is Elongation factor Tu of Xanthomonas oryzae pv. oryzae (strain MAFF 311018).